A 168-amino-acid chain; its full sequence is Small ribosomal subunit protein uS9 (168 aa).

Positions 1–29 are enriched in low complexity; the sequence is MAQNEELTAEAVEAEETLTSYTSESTSAE. The tract at residues 1 to 36 is disordered; it reads MAQNEELTAEAVEAEETLTSYTSESTSAEDAPKKER.

Belongs to the universal ribosomal protein uS9 family.

The polypeptide is Small ribosomal subunit protein uS9 (Paenarthrobacter aurescens (strain TC1)).